A 371-amino-acid chain; its full sequence is Putative glutamate--cysteine ligase 2 (371 aa).

It belongs to the glutamate--cysteine ligase type 2 family. YbdK subfamily.

It carries out the reaction L-cysteine + L-glutamate + ATP = gamma-L-glutamyl-L-cysteine + ADP + phosphate + H(+). In terms of biological role, ATP-dependent carboxylate-amine ligase which exhibits weak glutamate--cysteine ligase activity. This is Putative glutamate--cysteine ligase 2 from Paraburkholderia xenovorans (strain LB400).